Consider the following 166-residue polypeptide: Lipoprotein signal peptidase (166 aa).

Helical transmembrane passes span 12 to 32 (WLWLVVVVLIIDLGSKYLILQ), 70 to 90 (WFFAGIAIGICVILLVMMYRS), and 102 to 122 (ALIIGGALGNLFDRLWHGFVV). Active-site residues include Asp-123 and Asp-141. A helical membrane pass occupies residues 137 to 157 (FNLADSAICIGAALIVLEGFL).

This sequence belongs to the peptidase A8 family.

The protein resides in the cell inner membrane. It carries out the reaction Release of signal peptides from bacterial membrane prolipoproteins. Hydrolyzes -Xaa-Yaa-Zaa-|-(S,diacylglyceryl)Cys-, in which Xaa is hydrophobic (preferably Leu), and Yaa (Ala or Ser) and Zaa (Gly or Ala) have small, neutral side chains.. It functions in the pathway protein modification; lipoprotein biosynthesis (signal peptide cleavage). Its function is as follows. This protein specifically catalyzes the removal of signal peptides from prolipoproteins. In Salmonella choleraesuis (strain SC-B67), this protein is Lipoprotein signal peptidase.